A 264-amino-acid chain; its full sequence is Mannose-specific lectin CEA (264 aa).

The N-terminal stretch at 1–23 (MAKLLLFLLPAILGLLVPRSAVA) is a signal peptide. 2 Bulb-type lectin domains span residues 26 to 131 (TNYL…PWVP) and 145 to 252 (NNLL…PQAK). Beta-D-mannose-binding positions include 51–55 (QDDCN), Tyr59, Trp63, Gln64, 170–174 (QGDCN), Tyr178, and 182–185 (YGWQ). Positions 51-59 (QDDCNLVLY) match the Carbohydrate-binding motif 1 motif. Disulfide bonds link Cys54–Cys74 and Cys173–Cys195. The Carbohydrate-binding motif 2 motif lies at 170 to 178 (QGDCNLVLY).

Forms heterotetramer of 2 chains 1 and 2 chains 2 arranged as a dimer of chain 1 and chain 2 heterodimers.

It is found in the secreted. In terms of biological role, mannose-specific lectin. Shows agglutinating activity towards erythrocytes from rabbit. Has insecticidal activity against cotton aphids and other hemipteran insects. This chain is Mannose-specific lectin CEA, found in Colocasia esculenta (Wild taro).